A 641-amino-acid chain; its full sequence is Tegument protein UL35 (641 aa).

3 disordered regions span residues 353–373 (ERGE…PREA), 500–572 (ASSS…PRQR), and 587–641 (AYSH…LRHL). The span at 358-367 (GDEDEEQEND) shows a compositional bias: acidic residues. A compositionally biased stretch (low complexity) spans 500 to 563 (ASSSSASSSS…LSGSHGISSA (64 aa)). Basic residues predominate over residues 589–599 (SHHRRHRRRRS). Over residues 632-641 (DDLAENLRHL) the composition is skewed to basic and acidic residues.

This sequence belongs to the herpesviridae pp85 family. As to quaternary structure, interacts with UL82. Interacts with isoform UL35A. Interacts with host UBP7; this interaction significantly inhibits the ability of USP7 to form nuclear bodies. Interacts with host DCAF1 (via C-terminus). Interacts with host SNX5; this interaction allows proper gB localization during viral assembly. Interacts with host TBK1; this interaction prevents type I interferon production. Interacts with UL82. Interacts with isoform UL35. Interacts with host UBP7; this interaction significantly inhibits the ability of USP7 to form nuclear bodies. Interacts with host SNX5; this interaction allows proper gB localization during viral assembly.

Its subcellular location is the virion tegument. The protein resides in the host nucleus. It localises to the host cytoplasm. Plays important role in immediate-early gene expression through interaction with UL82. Forms nuclear bodies in host nucleus, independently of PML. In turn, UL35 nuclear bodies associate with and remodel PML bodies. Through interaction with host DCAF1, causes cells to accumulate in the G2 phase of the cell cycle by inducing a DNA damage response. Regulates viral assembly by controlling the localization of the essential gB through regulation of a retrograde transport pathway. This modulation occurs via binding and inhibition of host sorting nexin 5/SNX5. Also plays a role in the inhibition of pattern recognition receptor-mediated type I interferon signaling at the level of TBK1. In terms of biological role, promotes cytoplasmic UL82 accumulation and inhibits UL35-containing nuclear bodies formation. Regulates viral assembly by controlling the localization of the essential gB through regulation of a retrograde transport pathway. This modulation occurs via binding and inhibition of host sorting nexin 5/SNX5. The chain is Tegument protein UL35 (UL35) from Homo sapiens (Human).